The primary structure comprises 896 residues: MAAAAQLSLTQLSSGNPVYEKYYRQVDTGNTGRVLASDAAAFLKKSGLPDLILGKIWDLADTDGKGILNKQEFFVALRLVACAQNGLEVSLSSLNLAVPPPRFHDTSSPLLISGTSAAELPWAVKPEDKAKYDAIFDSLSPVNGFLSGDKVKPVLLNSKLPVDILGRVWELSDIDHDGMLDRDEFAVAMFLVYCALEKEPVPMSLPPALVPPSKRKTWVVSPAEKAKYDEIFLKTDKDMDGFVSGLEVREIFLKTGLPSTLLAHIWSLCDTKDCGKLSKDQFALAFHLISQKLIKGIDPPHVLTPEMIPPSDRASLQKNIIGSSPVADFSAIKELDTLNNEIVDLQREKNNVEQDLKEKEDTIKQRTSEVQDLQDEVQRENTNLQKLQAQKQQVQELLDELDEQKAQLEEQLKEVRKKCAEEAQLISSLKAELTSQESQISTYEEELAKAREELSRLQQETAELEESVESGKAQLEPLQQHLQDSQQEISSMQMKLMEMKDLENHNSQLNWCSSPHSILVNGATDYCSLSTSSSETANLNEHVEGQSNLESEPIHQESPARSSPELLPSGVTDENEVTTAVTEKVCSELDNNRHSKEEDPFNVDSSSLTGPVADTNLDFFQSDPFVGSDPFKDDPFGKIDPFGGDPFKGSDPFASDCFFRQSTDPFATSSTDPFSAANNSSITSVETLKHNDPFAPGGTVVAASDSATDPFASVFGNESFGGGFADFSTLSKVNNEDPFRSATSSSVSNVVITKNVFEETSVKSEDEPPALPPKIGTPTRPCPLPPGKRSINKLDSPDPFKLNDPFQPFPGNDSPKEKDPEIFCDPFTSATTTTNKEADPSNFANFSAYPSEEDMIEWAKRESEREEEQRLARLNQQEQEDLELAIALSKSEISEA.

The residue at position 2 (A2) is an N-acetylalanine. The tract at residues 2 to 330 (AAAAQLSLTQ…IGSSPVADFS (329 aa)) is interaction with DAB2. The EH 1 domain occupies 15 to 104 (GNPVYEKYYR…NLAVPPPRFH (90 aa)). Positions 48–83 (LPDLILGKIWDLADTDGKGILNKQEFFVALRLVACA) constitute an EF-hand 1 domain. 2 positions are modified to phosphoserine: S108 and S140. EH domains lie at 128-216 (DKAK…SKRK) and 224-314 (EKAK…SDRA). EF-hand domains follow at residues 160 to 195 (LPVD…VYCA), 223 to 258 (AEKA…TGLP), and 262 to 292 (LAHI…ISQK). Ca(2+)-binding residues include D173, D175, D177, M179, E184, D236, D238, D240, and E247. 7 positions are modified to phosphoserine: S323, S324, S467, S470, S485, S562, and S563. The segment at 542–606 (HVEGQSNLES…EEDPFNVDSS (65 aa)) is disordered. Over residues 585 to 599 (VCSELDNNRHSKEED) the composition is skewed to basic and acidic residues. 12 repeat units span residues 599–601 (DPF), 623–625 (DPF), 629–631 (DPF), 634–636 (DPF), 640–642 (DPF), 645–647 (DPF), 651–653 (DPF), 664–666 (DPF), 672–674 (DPF), 692–694 (DPF), 709–711 (DPF), and 737–739 (DPF). Positions 599-827 (DPFNVDSSSL…KDPEIFCDPF (229 aa)) are 15 X 3 AA repeats of D-P-F. S746 carries the phosphoserine modification. The tract at residues 760–848 (TSVKSEDEPP…DPSNFANFSA (89 aa)) is disordered. Positions 768-774 (PPALPPK) match the SH3-binding motif. A phosphothreonine mark is found at T777 and T779. S790 and S796 each carry phosphoserine. A run of 2 repeats spans residues 798 to 800 (DPF) and 804 to 806 (DPF). S814 bears the Phosphoserine mark. Repeat 15 spans residues 825–827 (DPF). Position 849 is a phosphotyrosine; by EGFR (Y849). UIM domains lie at 851–870 (SEED…EEQR) and 877–896 (QEQE…ISEA).

In terms of assembly, interacts with SGIP1. Interacts with HGS; the interaction bridges the interaction of STAM or STAM2 with EPS15. Isoform 2 interacts with HGS and AP2A2. Part of a complex at least composed of EPS15, HGS, and either STAM or STAM2. Binds AP2A2. Interacts with AP2B1; clathrin competes with EPS15. Binds STON2. Interacts (via its SH3-binding sites) with CRK. Interacts with SH3BP4/TTP. Interacts with ERBB2. Interacts with FCHO1. Interacts with FCHO2. Interacts (via EH domains) with DAB2. Interacts (via UIM repeats) with CORO7 (when ubiquitinated at 'Lys-472'). Interacts (via UIM domains) with UBQLN1 (via ubiquitin-like domain) and can interact with both the ubiquitinated and the non-ubiquitinated forms of UBQLN1. Interacts with UBQLN2. Interacts with REPS2; the interaction is direct. Interacts with EPN1; the interaction is direct. As to quaternary structure, (Microbial infection) Interacts with vaccinia virus protein A36. Phosphorylation on Tyr-849 is involved in the internalization of EGFR. Not required for membrane translocation after EGF treatment or for targeting to coated pits, but essential for a subsequent step in EGFR endocytosis. Phosphorylated on serine upon DNA damage, probably by ATM or ATR. Post-translationally, ubiquitinated. In terms of tissue distribution, ubiquitously expressed.

It is found in the cytoplasm. It localises to the cell membrane. The protein resides in the membrane. The protein localises to the clathrin-coated pit. Its subcellular location is the early endosome membrane. Its function is as follows. Involved in cell growth regulation. May be involved in the regulation of mitogenic signals and control of cell proliferation. Involved in the internalization of ligand-inducible receptors of the receptor tyrosine kinase (RTK) type, in particular EGFR. Plays a role in the assembly of clathrin-coated pits (CCPs). Acts as a clathrin adapter required for post-Golgi trafficking. Seems to be involved in CCPs maturation including invagination or budding. Involved in endocytosis of integrin beta-1 (ITGB1) and transferrin receptor (TFR); internalization of ITGB1 as DAB2-dependent cargo but not TFR seems to require association with DAB2. The chain is Epidermal growth factor receptor substrate 15 (EPS15) from Homo sapiens (Human).